Here is a 196-residue protein sequence, read N- to C-terminus: Holliday junction branch migration complex subunit RuvA (196 aa).

The segment at 1–63 (MINKIYGKIV…DDDVKLFGFL (63 aa)) is domain I. Residues 64-142 (NISEREVFEN…KGDESSSYML (79 aa)) form a domain II region. Position 143 (lysine 143) is a region of interest, flexible linker. A domain III region spans residues 143 to 196 (KFKELEQSIVNMGFDRKLVVVAFREIMLSDKFLILKEAEQEQFLFTETLKRLSV).

The protein belongs to the RuvA family. As to quaternary structure, homotetramer. Forms an RuvA(8)-RuvB(12)-Holliday junction (HJ) complex. HJ DNA is sandwiched between 2 RuvA tetramers; dsDNA enters through RuvA and exits via RuvB. An RuvB hexamer assembles on each DNA strand where it exits the tetramer. Each RuvB hexamer is contacted by two RuvA subunits (via domain III) on 2 adjacent RuvB subunits; this complex drives branch migration. In the full resolvosome a probable DNA-RuvA(4)-RuvB(12)-RuvC(2) complex forms which resolves the HJ.

It localises to the cytoplasm. In terms of biological role, the RuvA-RuvB-RuvC complex processes Holliday junction (HJ) DNA during genetic recombination and DNA repair, while the RuvA-RuvB complex plays an important role in the rescue of blocked DNA replication forks via replication fork reversal (RFR). RuvA specifically binds to HJ cruciform DNA, conferring on it an open structure. The RuvB hexamer acts as an ATP-dependent pump, pulling dsDNA into and through the RuvAB complex. HJ branch migration allows RuvC to scan DNA until it finds its consensus sequence, where it cleaves and resolves the cruciform DNA. This Borrelia recurrentis (strain A1) protein is Holliday junction branch migration complex subunit RuvA.